The sequence spans 668 residues: Exoribonuclease 2 (668 aa).

Positions 193-521 (RIEMTHVPFV…INHRMLKAVI (329 aa)) constitute an RNB domain. The S1 motif domain occupies 568–650 (QTCFTGEIFD…ENRSLVAKPT (83 aa)).

This sequence belongs to the RNR ribonuclease family. RNase II subfamily.

It localises to the cytoplasm. It carries out the reaction Exonucleolytic cleavage in the 3'- to 5'-direction to yield nucleoside 5'-phosphates.. Its function is as follows. Involved in mRNA degradation. Hydrolyzes single-stranded polyribonucleotides processively in the 3' to 5' direction. This is Exoribonuclease 2 from Vibrio parahaemolyticus serotype O3:K6 (strain RIMD 2210633).